We begin with the raw amino-acid sequence, 670 residues long: WD repeat-containing protein 48 homolog (670 aa).

WD repeat units lie at residues 13-52, 59-98, 101-140, 152-191, 194-233, 236-275, and 278-317; these read RHRN…SQEP, HHND…CMST, THRD…ALTA, GSKD…KIAK, GHTE…CIQT, VHSE…NSVL, and EERA…KLSN. A disordered region spans residues 321–348; that stretch reads SSNSSINSGGGGDGTPVTNSASNATPAS. Residues 338–348 are compositionally biased toward low complexity; that stretch reads TNSASNATPAS. The stretch at 359–398 is one WD 8 repeat; that stretch reads KGGAAIKKYHVLNDKRFMLTKDSEQNVAIYDVLKVKKVED. Residues 613–625 are compositionally biased toward gly residues; the sequence is GGGGGSSTGGGGN. Positions 613-645 are disordered; that stretch reads GGGGGSSTGGGGNSNSSQNNSQSDANSEGSQVP. Residues 626–635 show a composition bias toward low complexity; that stretch reads SNSSQNNSQS.

The protein belongs to the WD repeat WDR48 family. As to quaternary structure, catalytic component of the Usp12-46 deubiquitylase complex consisting of Usp12-46, Wdr20 and Uaf1; regulatory subunit that, together wtih Wdr20, stabilizes Usp12-46. The Usp12-46 deubiquitylase complex associates with arr/arrow; the interaction leads to deubiquitination and stabilization of arr/arrow.

Regulatory component of the Usp12-46 deubiquitylase complex. activates deubiquitination by increasing the catalytic turnover without increasing the affinity of deubiquitinating enzymes for the substrate. The complex deubiquitylates the wg/wingless-signaling receptor arr/arrow, which stabilizes the receptor and increases its concentration at the cell surface; this enhances the sensitivity of cells to wg/wingless-signal stimulation. This increases the amplitude and spatial range of the signaling response to the wg/wingless morphogen gradient, facilitating the precise concentration-dependent regulation of its target genes. Together with Wdr20 and Usp12-46 required for wg/wingless-mediated signaling in the wing imaginal disc and for wg/wingless-dependent regulation of intestinal stem cell proliferation. In Culex quinquefasciatus (Southern house mosquito), this protein is WD repeat-containing protein 48 homolog.